The sequence spans 408 residues: LL-diaminopimelate aminotransferase (408 aa).

Residues Tyr15 and Gly42 each contribute to the substrate site. Pyridoxal 5'-phosphate is bound by residues Tyr72, 108-109 (SK), Tyr132, Asn187, Tyr218, and 246-248 (SFS). Substrate-binding residues include Lys109, Tyr132, and Asn187. Lys249 carries the post-translational modification N6-(pyridoxal phosphate)lysine. Pyridoxal 5'-phosphate-binding residues include Arg257 and Asn292. Asn292 and Arg388 together coordinate substrate.

It belongs to the class-I pyridoxal-phosphate-dependent aminotransferase family. LL-diaminopimelate aminotransferase subfamily. In terms of assembly, homodimer. It depends on pyridoxal 5'-phosphate as a cofactor.

It carries out the reaction (2S,6S)-2,6-diaminopimelate + 2-oxoglutarate = (S)-2,3,4,5-tetrahydrodipicolinate + L-glutamate + H2O + H(+). It participates in amino-acid biosynthesis; L-lysine biosynthesis via DAP pathway; LL-2,6-diaminopimelate from (S)-tetrahydrodipicolinate (aminotransferase route): step 1/1. In terms of biological role, involved in the synthesis of meso-diaminopimelate (m-DAP or DL-DAP), required for both lysine and peptidoglycan biosynthesis. Catalyzes the direct conversion of tetrahydrodipicolinate to LL-diaminopimelate. The chain is LL-diaminopimelate aminotransferase from Leptospira borgpetersenii serovar Hardjo-bovis (strain JB197).